We begin with the raw amino-acid sequence, 458 residues long: UDP-N-acetylmuramate--L-alanine ligase (458 aa).

112–118 (GTHGKTT) contacts ATP.

Belongs to the MurCDEF family.

Its subcellular location is the cytoplasm. It catalyses the reaction UDP-N-acetyl-alpha-D-muramate + L-alanine + ATP = UDP-N-acetyl-alpha-D-muramoyl-L-alanine + ADP + phosphate + H(+). The protein operates within cell wall biogenesis; peptidoglycan biosynthesis. In terms of biological role, cell wall formation. In Syntrophotalea carbinolica (strain DSM 2380 / NBRC 103641 / GraBd1) (Pelobacter carbinolicus), this protein is UDP-N-acetylmuramate--L-alanine ligase.